The following is a 651-amino-acid chain: Probable export ATP-binding/permease protein Pfl01_2215 (651 aa).

One can recognise an ABC transporter domain in the interval 6-244; sequence LQLTGISRSF…LSNEDAVPKS (239 aa). 42 to 49 lines the ATP pocket; it reads GASGSGKS. Transmembrane regions (helical) follow at residues 250–270, 276–296, 524–544, 585–605, and 614–634; these read LVAS…ALIS, LLTM…SAIG, LALL…IGVM, LGGA…SLFI, and LTSV…FGFV.

This sequence belongs to the ABC transporter superfamily. Macrolide exporter (TC 3.A.1.122) family. As to quaternary structure, probably part of a tripartite efflux system, which is composed of an inner membrane transporter, a periplasmic membrane fusion protein, and an outer membrane component.

The protein localises to the cell inner membrane. Its function is as follows. Probably part of a tripartite efflux system. In Pseudomonas fluorescens (strain Pf0-1), this protein is Probable export ATP-binding/permease protein Pfl01_2215.